A 157-amino-acid chain; its full sequence is NudC domain-containing protein 2 (157 aa).

Residue Ser2 is modified to N-acetylserine. One can recognise a CS domain in the interval 14–104 (CGTPWGQWYQ…DAANCWTSLL (91 aa)). The tract at residues 134-157 (FDFSGAEISGNYTKGGPDFSNLEK) is disordered. Phosphoserine is present on Ser142. Tyr145 is subject to Phosphotyrosine.

In terms of assembly, interacts with LIS1.

Its subcellular location is the chromosome. It localises to the centromere. The protein localises to the kinetochore. It is found in the cytoplasm. The protein resides in the cytoskeleton. Its subcellular location is the microtubule organizing center. It localises to the centrosome. The protein localises to the spindle pole. Functionally, may regulate the LIS1/dynein pathway by stabilizing LIS1 with Hsp90 chaperone. The protein is NudC domain-containing protein 2 (NUDCD2) of Homo sapiens (Human).